Reading from the N-terminus, the 307-residue chain is Mycothiol acetyltransferase (307 aa).

N-acetyltransferase domains follow at residues 15–158 and 164–307; these read HTLD…LAEP and VTVR…RTES. A 1D-myo-inositol 2-(L-cysteinylamino)-2-deoxy-alpha-D-glucopyranoside-binding site is contributed by Glu-46. 90 to 92 serves as a coordination point for acetyl-CoA; it reads LVV. 1D-myo-inositol 2-(L-cysteinylamino)-2-deoxy-alpha-D-glucopyranoside-binding residues include Glu-191, Lys-230, and Glu-239. Acetyl-CoA contacts are provided by residues 243 to 245 and 250 to 256; these read VGV and QGGGLGK. Residue Tyr-277 participates in 1D-myo-inositol 2-(L-cysteinylamino)-2-deoxy-alpha-D-glucopyranoside binding.

It belongs to the acetyltransferase family. MshD subfamily. As to quaternary structure, monomer.

It carries out the reaction 1D-myo-inositol 2-(L-cysteinylamino)-2-deoxy-alpha-D-glucopyranoside + acetyl-CoA = mycothiol + CoA + H(+). Its function is as follows. Catalyzes the transfer of acetyl from acetyl-CoA to desacetylmycothiol (Cys-GlcN-Ins) to form mycothiol. The sequence is that of Mycothiol acetyltransferase from Streptomyces griseus subsp. griseus (strain JCM 4626 / CBS 651.72 / NBRC 13350 / KCC S-0626 / ISP 5235).